A 567-amino-acid chain; its full sequence is Probable transport protein (567 aa).

Positions 1 to 30 are enriched in basic and acidic residues; that stretch reads MSDRVEVNERRSDSVSEKEPARDDARKDVT. Positions 1–38 are disordered; the sequence is MSDRVEVNERRSDSVSEKEPARDDARKDVTDDQEDAPP. Over 1–46 the chain is Cytoplasmic; the sequence is MSDRVEVNERRSDSVSEKEPARDDARKDVTDDQEDAPPFMTANNAR. The helical transmembrane segment at 47–67 threads the bilayer; it reads VMLVQAIGGSLNGYSIGFVGV. The Extracellular portion of the chain corresponds to 68–160; sequence YSTLFGYSTN…PSGYSSSESG (93 aa). A helical membrane pass occupies residues 161 to 181; the sequence is IFAGSMIAGCLIGSVFAGPLA. The Cytoplasmic portion of the chain corresponds to 182–189; it reads SKIGARLS. A helical transmembrane segment spans residues 190 to 210; it reads FLLVGLVGVVASVMYHASCAA. At 211-212 the chain is on the extracellular side; sequence DE. Residues 213-233 form a helical membrane-spanning segment; the sequence is FWVLIVGRFVIGLFLGVICVA. Topologically, residues 234 to 249 are cytoplasmic; sequence CPVYTDQNAHPKWKRT. The chain crosses the membrane as a helical span at residues 250-270; sequence IGVMFQVFTTLGIFVAALMGL. Residues 271-289 are Extracellular-facing; that stretch reads ALGQSIRFDHDGDQKVMAR. A helical membrane pass occupies residues 290–310; the sequence is MQGLCVFSTLFSLLTVVLGIV. At 311–341 the chain is on the cytoplasmic side; sequence TRESRAKFDGGEEGRAELNPSEYGYVEMIPR. Residues 342-362 form a helical membrane-spanning segment; sequence LLMGCVMAGTLQLTGINAVMN. Topologically, residues 363-366 are extracellular; sequence YAPT. The helical transmembrane segment at 367 to 387 threads the bilayer; that stretch reads IMGSLGLAPLVGNFVVMLWNF. Over 388 to 404 the chain is Cytoplasmic; it reads VTTLASIPLSYVFTMRH. A helical transmembrane segment spans residues 405–425; the sequence is VFLFGSIFTSCMCLFMCGIPV. Residues 426–437 lie on the Extracellular side of the membrane; the sequence is YPGVSKKLEAKN. Residues 438 to 458 form a helical membrane-spanning segment; sequence GVAITGILLFILGFEVCVGPC. The Cytoplasmic portion of the chain corresponds to 459-480; that stretch reads YYVLTQDMFPPSFRPRGASFTQ. The helical transmembrane segment at 481–501 threads the bilayer; sequence VAQFIFNLIINVCYPIATESI. Residues 502-514 are Extracellular-facing; that stretch reads SGGPSGNQDKGQA. The chain crosses the membrane as a helical span at residues 515–535; it reads VAFIFFGGLGLICFVIQVFFL. The Cytoplasmic segment spans residues 536–567; it reads HPWDEERDGKKVVAPAIGKKELSEESIGNRAE.

This sequence belongs to the major facilitator superfamily. Sugar transporter (TC 2.A.1.1) family.

It localises to the membrane. Functionally, probable membrane transport protein. The polypeptide is Probable transport protein (PRO-1) (Leishmania enriettii).